The sequence spans 209 residues: Adenylate kinase (209 aa).

ATP is bound at residue 59-64 (GSGKRT). Residues 79 to 108 (SSGQVLTRGVESGSETSQLAHSYVSRGERV) form an NMP region. Residues serine 80, 106–108 (ERV), 135–138 (GYPR), and glutamine 142 each bind AMP. The tract at residues 172 to 205 (HRRYDPATNKXYHMLDNPPPGGRCRVMRTAPAEG) is LID. Arginine 173 is a binding site for ATP.

The protein belongs to the adenylate kinase family. Monomer.

It is found in the cytoplasm. It carries out the reaction AMP + ATP = 2 ADP. In terms of biological role, catalyzes the reversible transfer of the terminal phosphate group between ATP and AMP. Plays an important role in cellular energy homeostasis and in adenine nucleotide metabolism. The sequence is that of Adenylate kinase from Trypanosoma brucei rhodesiense.